The following is a 480-amino-acid chain: ATP synthase subunit beta (480 aa).

Residue 158–165 participates in ATP binding; the sequence is GGAGVGKT.

Belongs to the ATPase alpha/beta chains family. In terms of assembly, F-type ATPases have 2 components, CF(1) - the catalytic core - and CF(0) - the membrane proton channel. CF(1) has five subunits: alpha(3), beta(3), gamma(1), delta(1), epsilon(1). CF(0) has three main subunits: a(1), b(2) and c(9-12). The alpha and beta chains form an alternating ring which encloses part of the gamma chain. CF(1) is attached to CF(0) by a central stalk formed by the gamma and epsilon chains, while a peripheral stalk is formed by the delta and b chains.

The protein resides in the cell inner membrane. The enzyme catalyses ATP + H2O + 4 H(+)(in) = ADP + phosphate + 5 H(+)(out). In terms of biological role, produces ATP from ADP in the presence of a proton gradient across the membrane. The catalytic sites are hosted primarily by the beta subunits. This Koribacter versatilis (strain Ellin345) protein is ATP synthase subunit beta.